The sequence spans 85 residues: Small ribosomal subunit protein bS20 (85 aa).

It belongs to the bacterial ribosomal protein bS20 family.

Its function is as follows. Binds directly to 16S ribosomal RNA. The chain is Small ribosomal subunit protein bS20 from Lactobacillus johnsonii (strain CNCM I-12250 / La1 / NCC 533).